Reading from the N-terminus, the 309-residue chain is Taste receptor type 2 member 31 (309 aa).

The Extracellular portion of the chain corresponds to 1–2; sequence MT. The chain crosses the membrane as a helical span at residues 3–23; that stretch reads TFIPIIFSSVVVVLFVIGNFA. The Cytoplasmic segment spans residues 24 to 55; sequence NGFIALVNSIERVKRQKISFADQILTALAVSR. The helical transmembrane segment at 56–76 threads the bilayer; it reads VGLLWVLLLNWYSTVFNPAFY. Topologically, residues 77 to 100 are extracellular; sequence SVEVRTTAYNVWAVTGHFSNWLAT. The helical transmembrane segment at 101–121 threads the bilayer; sequence SLSIFYLLKIANFSNLIFLHL. Residues 122-126 lie on the Cytoplasmic side of the membrane; the sequence is KRRVK. Residues 127 to 147 form a helical membrane-spanning segment; it reads SVILVMLLGPLLFLACQLFVI. Residues 148-181 lie on the Extracellular side of the membrane; that stretch reads NMKEIVRTKEYEGNLTWKIKLRSAVYLSDATVTT. N-linked (GlcNAc...) asparagine glycosylation is present at asparagine 161. The helical transmembrane segment at 182–202 threads the bilayer; it reads LGNLVPFTLTLLCFLLLICSL. Topologically, residues 203–229 are cytoplasmic; it reads CKHLKKMQLHGKGSQDPSTKVHIKALQ. Residues 230 to 250 form a helical membrane-spanning segment; it reads TVIFFLLLCAVYFLSIMISVW. Residues 251–259 are Extracellular-facing; the sequence is SFGSLENKP. Residues 260–280 form a helical membrane-spanning segment; the sequence is VFMFCKAIRFSYPSIHPFILI. The Cytoplasmic portion of the chain corresponds to 281 to 309; it reads WGNKKLKQTFLSVLRQVRYWVKGEKPSSP.

The protein belongs to the G-protein coupled receptor T2R family. Expressed in subsets of taste receptor cells of the tongue and exclusively in gustducin-positive cells.

It is found in the membrane. In terms of biological role, receptor that may play a role in the perception of bitterness and is gustducin-linked. May play a role in sensing the chemical composition of the gastrointestinal content. The activity of this receptor may stimulate alpha gustducin, mediate PLC-beta-2 activation and lead to the gating of TRPM5. Activated by the sulfonyl amide sweeteners saccharin and acesulfame K. The protein is Taste receptor type 2 member 31 (TAS2R31) of Homo sapiens (Human).